Reading from the N-terminus, the 198-residue chain is Carnitine operon protein CaiE (198 aa).

The disordered stretch occupies residues 174–198 (KPLTQAEENRPRLKGTTDVKPKSAQ). The span at 180–198 (EENRPRLKGTTDVKPKSAQ) shows a compositional bias: basic and acidic residues.

It belongs to the transferase hexapeptide repeat family.

The protein operates within amine and polyamine metabolism; carnitine metabolism. In terms of biological role, overproduction of CaiE stimulates the activity of CaiB and CaiD. The polypeptide is Carnitine operon protein CaiE (Salmonella typhimurium (strain LT2 / SGSC1412 / ATCC 700720)).